We begin with the raw amino-acid sequence, 419 residues long: Cell division protein FtsZ (419 aa).

GTP is bound by residues 22–26 (GGGGN), 109–111 (GSG), Glu-140, Arg-144, and Asp-188. The segment at 397–419 (ERFEAPISQDEDELDTPPFFKNR) is disordered.

It belongs to the FtsZ family. As to quaternary structure, homodimer. Polymerizes to form a dynamic ring structure in a strictly GTP-dependent manner. Interacts directly with several other division proteins. Interacts with CcrZ; the interaction is direct.

It localises to the cytoplasm. Essential cell division protein that forms a contractile ring structure (Z ring) at the future cell division site. The regulation of the ring assembly controls the timing and the location of cell division. One of the functions of the FtsZ ring is to recruit other cell division proteins to the septum to produce a new cell wall between the dividing cells. Binds GTP and shows GTPase activity. The sequence is that of Cell division protein FtsZ from Streptococcus pneumoniae serotype 2 (strain D39 / NCTC 7466).